Consider the following 70-residue polypeptide: MTTIRVKDNEPFEVAMRRFKRTMEKTGLLTELRAREFYEKPTAERKRKKAAAVKRHFKRLRGQMLPKKFY.

Belongs to the bacterial ribosomal protein bS21 family.

The sequence is that of Small ribosomal subunit protein bS21B from Paraburkholderia xenovorans (strain LB400).